The primary structure comprises 188 residues: MNITATVLLAFGMSMDAFAASIGKGATLHKPKFSEALRTGLIFGAVETLTPLIGWGMGMLASRFVLEWNHWIAFVLLIFLGGRMIIEGFRGPDDEDEEPRRRHGFWLLVTTAIATSLDAMAVGVGLAFLQVNIIATALAIGCATLIMSTLGMMVGRFIGSIIGKKAEILGGLVLIGIGVQILWTHFHG.

Helical transmembrane passes span 3 to 23 (ITATVLLAFGMSMDAFAASIG), 66 to 86 (LEWNHWIAFVLLIFLGGRMII), 106 to 128 (WLLVTTAIATSLDAMAVGVGLAF), 143 to 163 (ATLIMSTLGMMVGRFIGSIIG), and 168 to 188 (ILGGLVLIGIGVQILWTHFHG).

Belongs to the MntP (TC 9.B.29) family.

The protein localises to the cell inner membrane. Its function is as follows. Probably functions as a manganese efflux pump. This Escherichia coli O7:K1 (strain IAI39 / ExPEC) protein is Probable manganese efflux pump MntP.